A 1102-amino-acid polypeptide reads, in one-letter code: Coiled-coil domain-containing protein AGAP005037 (1102 aa).

Residues Met-1 to Ser-11 are compositionally biased toward basic and acidic residues. Disordered stretches follow at residues Met-1–Gly-69 and His-295–Tyr-318. Positions Ser-12–Thr-21 are enriched in low complexity. A compositionally biased stretch (basic and acidic residues) spans Ile-50–Arg-65. A coiled-coil region spans residues His-405–Asn-430. Disordered stretches follow at residues Arg-450–His-475 and Asp-489–Met-539. Coiled-coil stretches lie at residues Glu-554–Leu-579 and Asp-614–Asn-654. Disordered stretches follow at residues Leu-745 to Arg-774, Thr-832 to Asn-958, and Leu-1031 to Pro-1087. The span at Thr-832–Val-849 shows a compositional bias: polar residues. Residues Pro-867–Pro-881 are compositionally biased toward pro residues. The segment covering Thr-904–Val-918 has biased composition (low complexity). Residues Asp-936 to Asn-958 are compositionally biased toward polar residues.

This Anopheles gambiae (African malaria mosquito) protein is Coiled-coil domain-containing protein AGAP005037.